We begin with the raw amino-acid sequence, 809 residues long: Protein TRC8 homolog (809 aa).

The next 11 helical transmembrane spans lie at 124–144 (TVKFVLCVFAFLSAACIFMLW), 147–167 (HLVMVYMFLTSLGLTFLSYWS), 200–220 (VMSLAPHLMAQWFMGMLFAYI), 233–253 (MPIIFASPILLAMLPLPAKVV), 256–276 (LPVVAVFTPIILTKITLMQSA), 350–370 (LVDGCETMTAVLGMTGVISMF), 392–412 (LGTVSAVLFYILALQTGLTSL), 425–445 (LCLLMTALLHFLHNIVSPILM), 461–481 (ALSVCAFLVVLSVSLLYHLWS), 488–508 (WLLAVTAFSVEVVVKVLVSLA), and 539–559 (SVEFCFGILLFINGAWILIFE). The RING-type; atypical zinc-finger motif lies at 621 to 659 (CAICYQEMYSAKITRCRHFFHGVCLRKWLYVQDRCPLCH). Disordered regions lie at residues 696-724 (NNAAAQRRSPERAPVEASEQAPATSSSSA) and 752-788 (VASSSSATHRISASGSSDSSYMTASAQSPPPTATSAA). Positions 711 to 724 (EASEQAPATSSSSA) are enriched in low complexity.

As to quaternary structure, interacts with VHL. Interacts with the MPN domain of CSN5. Interacts with EIF3F and EIF3H.

Its subcellular location is the endoplasmic reticulum membrane. Its function is as follows. Plays a role in growth inhibition that is dependent upon COP9 signalosome subunits CSN5 and CSN6. May modulate signalosome levels or compartmentalization. Probably functions in the same or a related pathway to VHL during early midline development. In Drosophila melanogaster (Fruit fly), this protein is Protein TRC8 homolog.